The chain runs to 69 residues: Intrepicalcin (69 aa).

An N-terminal signal peptide occupies residues 1–27 (MRQNTMTIIFIVFIVTFASLTIYGAEA). The propeptide occupies 28–36 (SEANFLERR). 3 cysteine pairs are disulfide-bonded: Cys-39–Cys-53, Cys-46–Cys-57, and Cys-52–Cys-68. An essential for stimulation of [3H]ryanodine binding to RYR1 region spans residues 59 to 60 (RR).

Belongs to the scorpion calcin family. Expressed by the venom gland.

Its subcellular location is the secreted. In terms of biological role, this toxin stabilizes ryanodine receptor 1 (RyR1) opening in a long-lasting subconductance state (55% of the full conductance state). Furthermore, it triggers calcium release from sarcoplasmic vesicles (45.3 nM are enough to induce a sharp release, and 50% of the total calcium is released after toxin (100 nM) addition) probably by acting as a cell-penetrating peptide (CPP). In addition, it has been shown to dose-dependently stimulate ryanodine binding to RyR1 (EC(50)=17.4 nM). It also augments the bell-shaped calcium-[3H]ryanodine binding curve that is maximal at about 10 uM calcium concentration. It binds a different site as ryanodine. It acts synergistically with caffeine. In vivo, intracerebroventricular injection into mice induces neurotoxic symptoms, followed by death. The sequence is that of Intrepicalcin from Thorellius intrepidus (Scorpion).